Reading from the N-terminus, the 589-residue chain is 3-hydroxy-3-methylglutaryl coenzyme A reductase 2-B (589 aa).

Topologically, residues 1 to 35 (MDVRRRPVTKTLTAGEPLKSQNQHSSSLKASDALP) are lumenal. A helical transmembrane segment spans residues 36 to 56 (LPLYLTNGLFFTMFFSVMYFL). Residues 57–79 (LHRWREKIRNSVPLHVVTLSELA) are Cytoplasmic-facing. The helical transmembrane segment at 80–100 (ALVLLVASVIYLLGFFGIGFV) threads the bilayer. Topologically, residues 101–544 (QSLIRPSPDS…SKESPGPNSR (444 aa)) are lumenal. Asn-256 carries an N-linked (GlcNAc...) asparagine glycan. Glu-268 serves as the catalytic Charge relay system. Asn-332 carries N-linked (GlcNAc...) asparagine glycosylation. Catalysis depends on charge relay system residues Lys-400 and Asp-476. The helical transmembrane segment at 545–565 (LLASIVAGSVLAGELSLMSAL) threads the bilayer. Over 566–589 (AAGQLVKSHMKFNRSSKDVSKLSS) the chain is Cytoplasmic. Residue His-574 is the Proton donor of the active site.

It belongs to the HMG-CoA reductase family.

Its subcellular location is the endoplasmic reticulum membrane. The catalysed reaction is (R)-mevalonate + 2 NADP(+) + CoA = (3S)-3-hydroxy-3-methylglutaryl-CoA + 2 NADPH + 2 H(+). The protein operates within metabolic intermediate biosynthesis; (R)-mevalonate biosynthesis; (R)-mevalonate from acetyl-CoA: step 3/3. Catalyzes the synthesis of mevalonate, the specific precursor of all isoprenoid compounds present in plants. Component of the triterpene saponins (e.g. ginsenosides or panaxosides) and phytosterols biosynthetic pathways. Promotes triterpenes accumulation in roots. The sequence is that of 3-hydroxy-3-methylglutaryl coenzyme A reductase 2-B from Panax ginseng (Korean ginseng).